Reading from the N-terminus, the 101-residue chain is Small ribosomal subunit protein uS14 (101 aa).

Belongs to the universal ribosomal protein uS14 family. As to quaternary structure, part of the 30S ribosomal subunit. Contacts proteins S3 and S10.

Its function is as follows. Binds 16S rRNA, required for the assembly of 30S particles and may also be responsible for determining the conformation of the 16S rRNA at the A site. The chain is Small ribosomal subunit protein uS14 from Actinobacillus pleuropneumoniae serotype 3 (strain JL03).